Consider the following 419-residue polypeptide: UPF0242 protein TC_0906 (419 aa).

Belongs to the UPF0242 family.

The polypeptide is UPF0242 protein TC_0906 (Chlamydia muridarum (strain MoPn / Nigg)).